Consider the following 387-residue polypeptide: Probable aminomethyltransferase, mitochondrial (387 aa).

The substrate site is built by Glu-219, Arg-248, and Tyr-385.

It belongs to the GcvT family. The glycine cleavage system is composed of four proteins: P, T, L and H.

The protein localises to the mitochondrion. It catalyses the reaction N(6)-[(R)-S(8)-aminomethyldihydrolipoyl]-L-lysyl-[protein] + (6S)-5,6,7,8-tetrahydrofolate = N(6)-[(R)-dihydrolipoyl]-L-lysyl-[protein] + (6R)-5,10-methylene-5,6,7,8-tetrahydrofolate + NH4(+). Functionally, the glycine cleavage system catalyzes the degradation of glycine. This Schizosaccharomyces pombe (strain 972 / ATCC 24843) (Fission yeast) protein is Probable aminomethyltransferase, mitochondrial (gcv1).